A 670-amino-acid chain; its full sequence is DNA ligase (670 aa).

Residues 33–37 (DAEYD), 82–83 (SL), and Glu-114 each bind NAD(+). The N6-AMP-lysine intermediate role is filled by Lys-116. The NAD(+) site is built by Arg-137, Glu-173, Lys-291, and Lys-315. Residues Cys-409, Cys-412, Cys-427, and Cys-433 each contribute to the Zn(2+) site. In terms of domain architecture, BRCT spans 592-670 (VQSDRLSGNT…ENALAELLSD (79 aa)).

It belongs to the NAD-dependent DNA ligase family. LigA subfamily. It depends on Mg(2+) as a cofactor. Mn(2+) is required as a cofactor.

The enzyme catalyses NAD(+) + (deoxyribonucleotide)n-3'-hydroxyl + 5'-phospho-(deoxyribonucleotide)m = (deoxyribonucleotide)n+m + AMP + beta-nicotinamide D-nucleotide.. DNA ligase that catalyzes the formation of phosphodiester linkages between 5'-phosphoryl and 3'-hydroxyl groups in double-stranded DNA using NAD as a coenzyme and as the energy source for the reaction. It is essential for DNA replication and repair of damaged DNA. The polypeptide is DNA ligase (Idiomarina loihiensis (strain ATCC BAA-735 / DSM 15497 / L2-TR)).